A 344-amino-acid polypeptide reads, in one-letter code: MALPRPTSPHARGSNRTPAIMRLVLGACVPGLLTLTWLYGPGTLLNLAWASLVALACEAAMLALRKRPPGVFLKDGSALVTALLLAVALPPYAPWWLTLVATFFALVFGKHLYGGLGQNPFNPAMLGYVVALVSFPLEMTRWPSPDSALGLPDSLREFLGLATRPDAWAHATALDVLKTDRSLTVDELFAGNPAFGHLGSAGSEWVNLAFLLGGLFLLWRRLFTWHAPLGMLAGLFAMSLLFWNGSGSDSHGSPLFHLFSGATMLGAFFIVTDPVSGATSNRGRLVFGLGVGVLTYVIRAWGGYPDGVAFAVLLMNLAAPTIDYYTRPRTYGHRKAERGFKAGD.

The next 4 helical transmembrane spans lie at 23–43 (LVLG…GPGT), 44–64 (LLNL…MLAL), 77–99 (SALV…WLTL), and 120–140 (PFNP…LEMT). An FMN phosphoryl threonine modification is found at Thr172. Helical transmembrane passes span 198 to 218 (LGSA…LFLL), 222 to 242 (LFTW…SLLF), 252 to 272 (GSPL…FIVT), 285 to 305 (LVFG…GGYP), and 306 to 326 (DGVA…DYYT).

It belongs to the NqrB/RnfD family. As to quaternary structure, the complex is composed of six subunits: RnfA, RnfB, RnfC, RnfD, RnfE and RnfG. Requires FMN as cofactor.

It localises to the cell inner membrane. In terms of biological role, part of a membrane-bound complex that couples electron transfer with translocation of ions across the membrane. The sequence is that of Ion-translocating oxidoreductase complex subunit D from Pseudomonas aeruginosa (strain UCBPP-PA14).